The following is a 246-amino-acid chain: Mast cell protease 1 (246 aa).

The N-terminal stretch at 1–18 is a signal peptide; sequence MQALLFLLALLWPPEAGA. A propeptide spans 19 to 20 (activation peptide); sequence EE. One can recognise a Peptidase S1 domain in the interval 21–244; sequence IIGGVESKPH…YVPWINLVIR (224 aa). Cysteines 50 and 66 form a disulfide. Residues His-65 and Asp-109 each act as charge relay system in the active site. 2 disulfides stabilise this stretch: Cys-143-Cys-208 and Cys-174-Cys-187. Ser-202 serves as the catalytic Charge relay system.

Belongs to the peptidase S1 family. Granzyme subfamily.

The chain is Mast cell protease 1 from Meriones unguiculatus (Mongolian jird).